The chain runs to 1198 residues: Rac guanine nucleotide exchange factor B (1198 aa).

The tract at residues 1-104 (MFSNFFGSSK…QHQGVITSLQ (104 aa)) is disordered. Over residues 8-20 (SSKRNTIASSSSS) the composition is skewed to low complexity. Positions 21 to 34 (SKKDKDNGKDESSK) are enriched in basic and acidic residues. Residues 35 to 58 (LKNSGSSTLPKPITNNESGNNFIT) show a composition bias toward polar residues. Residues 59-97 (SPSVSSPLISPLSSSPSPLLSSSSNSIQSTSHQQQQQHQ) are compositionally biased toward low complexity. The Calponin-homology (CH) 1 domain maps to 126-232 (SSLEQTARKW…NIVVLGKHAS (107 aa)). Positions 260–284 (FGGNHNNNNNNNNNNNTSNGDLSPV) are disordered. The span at 263-275 (NHNNNNNNNNNNN) shows a compositional bias: low complexity. Calponin-homology (CH) domains follow at residues 341 to 449 (PELQ…NKMY) and 511 to 619 (PEDM…ENFD). Residues 632 to 846 (RRQKVIEEII…KRVADHVNES (215 aa)) enclose the DH domain. A PH domain is found at 876–1026 (TYIREGFLEI…WMEDLRSCLQ (151 aa)). Over residues 940 to 952 (GEACVDGDDDGGE) the composition is skewed to acidic residues. Disordered regions lie at residues 940–989 (GEAC…SNKS) and 1076–1198 (NNNN…IDNQ). 2 stretches are compositionally biased toward low complexity: residues 977 to 989 (NSNN…SNKS) and 1076 to 1118 (NNNN…NNND). A compositionally biased stretch (acidic residues) spans 1155 to 1167 (DETISDTESDDYE). Over residues 1188-1198 (FSDTIKNIDNQ) the composition is skewed to polar residues.

As to quaternary structure, binds to F-actin.

The protein localises to the late endosome. Functionally, involved in the regulation of the late steps of the endocytic pathway. This Dictyostelium discoideum (Social amoeba) protein is Rac guanine nucleotide exchange factor B (gxcB).